Here is a 195-residue protein sequence, read N- to C-terminus: Protein GrpE (195 aa).

The span at 1-18 shows a compositional bias: basic and acidic residues; that stretch reads MDPKEKKTKQEEELKVDD. The segment at 1 to 41 is disordered; it reads MDPKEKKTKQEEELKVDDIQDTVEGQSQNEEATEATEPLTA.

The protein belongs to the GrpE family. Homodimer.

The protein resides in the cytoplasm. In terms of biological role, participates actively in the response to hyperosmotic and heat shock by preventing the aggregation of stress-denatured proteins, in association with DnaK and GrpE. It is the nucleotide exchange factor for DnaK and may function as a thermosensor. Unfolded proteins bind initially to DnaJ; upon interaction with the DnaJ-bound protein, DnaK hydrolyzes its bound ATP, resulting in the formation of a stable complex. GrpE releases ADP from DnaK; ATP binding to DnaK triggers the release of the substrate protein, thus completing the reaction cycle. Several rounds of ATP-dependent interactions between DnaJ, DnaK and GrpE are required for fully efficient folding. The sequence is that of Protein GrpE from Bacteroides fragilis (strain ATCC 25285 / DSM 2151 / CCUG 4856 / JCM 11019 / LMG 10263 / NCTC 9343 / Onslow / VPI 2553 / EN-2).